The following is a 566-amino-acid chain: Proline--tRNA ligase (566 aa).

This sequence belongs to the class-II aminoacyl-tRNA synthetase family. ProS type 1 subfamily. As to quaternary structure, homodimer.

It is found in the cytoplasm. The catalysed reaction is tRNA(Pro) + L-proline + ATP = L-prolyl-tRNA(Pro) + AMP + diphosphate. Its function is as follows. Catalyzes the attachment of proline to tRNA(Pro) in a two-step reaction: proline is first activated by ATP to form Pro-AMP and then transferred to the acceptor end of tRNA(Pro). As ProRS can inadvertently accommodate and process non-cognate amino acids such as alanine and cysteine, to avoid such errors it has two additional distinct editing activities against alanine. One activity is designated as 'pretransfer' editing and involves the tRNA(Pro)-independent hydrolysis of activated Ala-AMP. The other activity is designated 'posttransfer' editing and involves deacylation of mischarged Ala-tRNA(Pro). The misacylated Cys-tRNA(Pro) is not edited by ProRS. The chain is Proline--tRNA ligase from Staphylococcus saprophyticus subsp. saprophyticus (strain ATCC 15305 / DSM 20229 / NCIMB 8711 / NCTC 7292 / S-41).